The sequence spans 1171 residues: DNA polymerase catalytic subunit (1171 aa).

3 disordered regions span residues 647–687, 704–735, and 1149–1171; these read GTPA…PFRT, PGGGAVSSASVGGRAAVSPSETPAEREPEPAP, and VEEEVCESERGGSGLLSSLDSSR. Positions 649–662 are enriched in pro residues; it reads PARPPETPARPPET. Composition is skewed to low complexity over residues 663-674 and 709-725; these read PAAGPSGAAHAG and VSSASVGGRAAVSPSET. The span at 1149–1158 shows a compositional bias: basic and acidic residues; it reads VEEEVCESER.

The protein belongs to the DNA polymerase type-B family.

The protein resides in the host nucleus. The enzyme catalyses DNA(n) + a 2'-deoxyribonucleoside 5'-triphosphate = DNA(n+1) + diphosphate. The protein is DNA polymerase catalytic subunit (DPOL) of Tupaia belangeri (Common tree shrew).